The following is a 33-amino-acid chain: Toxin BcV (33 aa).

Cys6 and Cys30 form a disulfide bridge.

It localises to the secreted. The protein localises to the nematocyst. Its function is as follows. Potently and reversibly blocks mammalian Kv11/KCNH/ERG voltage-gated potassium channels. Acts as a gating-modifier toxin that shifts the voltage-dependence of ERG activation in the positive direction and suppresses its current amplitudes elicited by strong depolarizing pulses that maximally activate the channels. In Bunodosoma caissarum (Sea anemone), this protein is Toxin BcV.